Reading from the N-terminus, the 557-residue chain is Arginine--tRNA ligase (557 aa).

Positions 132–142 (ANPTGDLHLGH) match the 'HIGH' region motif.

It belongs to the class-I aminoacyl-tRNA synthetase family. As to quaternary structure, monomer.

It is found in the cytoplasm. It catalyses the reaction tRNA(Arg) + L-arginine + ATP = L-arginyl-tRNA(Arg) + AMP + diphosphate. The polypeptide is Arginine--tRNA ligase (Bacillus pumilus (strain SAFR-032)).